Here is an 836-residue protein sequence, read N- to C-terminus: uncharacterized protein (836 aa).

Disordered stretches follow at residues M1–E25, D692–R718, and E789–S836. Polar residues-rich tracts occupy residues E789–R799 and I825–S836.

It localises to the nucleus. This is an uncharacterized protein from Schizosaccharomyces pombe (strain 972 / ATCC 24843) (Fission yeast).